The chain runs to 130 residues: Bet1-like SNARE 1-2 (130 aa).

Residues 1–106 lie on the Cytoplasmic side of the membrane; sequence MNFRRENRAS…EKKSNRKSCK (106 aa). Positions 33-95 constitute a t-SNARE coiled-coil homology domain; it reads AHDERDNDEA…SGTINRFKLV (63 aa). Positions 40 to 82 form a coiled coil; that stretch reads DEALENLQDRVSFLKRVTGDIHEEVENHNRLLDKVGNKMDSAR. A helical; Anchor for type IV membrane protein membrane pass occupies residues 107–122; that stretch reads LIAYFVLLFLIMYYLI. Residues 123 to 130 lie on the Vesicular side of the membrane; it reads RLLNYIKG.

Belongs to the BET1 family.

The protein resides in the golgi apparatus membrane. Its subcellular location is the endoplasmic reticulum membrane. In terms of biological role, required for vesicular transport from the ER to the Golgi complex. Functions as a SNARE associated with ER-derived vesicles. The sequence is that of Bet1-like SNARE 1-2 (BET12) from Arabidopsis thaliana (Mouse-ear cress).